The following is a 338-amino-acid chain: Glycerol-3-phosphate dehydrogenase [NAD(P)+] (338 aa).

The NADPH site is built by serine 13, tryptophan 14, and lysine 108. Residues lysine 108, glycine 139, and serine 141 each contribute to the sn-glycerol 3-phosphate site. An NADPH-binding site is contributed by alanine 143. 5 residues coordinate sn-glycerol 3-phosphate: lysine 194, aspartate 247, serine 257, arginine 258, and asparagine 259. The active-site Proton acceptor is lysine 194. Arginine 258 is a binding site for NADPH. NADPH contacts are provided by valine 282 and glutamate 284.

This sequence belongs to the NAD-dependent glycerol-3-phosphate dehydrogenase family.

It localises to the cytoplasm. The enzyme catalyses sn-glycerol 3-phosphate + NAD(+) = dihydroxyacetone phosphate + NADH + H(+). The catalysed reaction is sn-glycerol 3-phosphate + NADP(+) = dihydroxyacetone phosphate + NADPH + H(+). It participates in membrane lipid metabolism; glycerophospholipid metabolism. In terms of biological role, catalyzes the reduction of the glycolytic intermediate dihydroxyacetone phosphate (DHAP) to sn-glycerol 3-phosphate (G3P), the key precursor for phospholipid synthesis. This is Glycerol-3-phosphate dehydrogenase [NAD(P)+] from Streptococcus agalactiae serotype III (strain NEM316).